A 594-amino-acid chain; its full sequence is CTP synthase (594 aa).

Residues 1–272 (MARPKNVKYV…DLRVLKKLGL (272 aa)) are amidoligase domain. Ser-18 provides a ligand contact to CTP. Ser-18 is a binding site for UTP. 19–24 (SLGKGI) lines the ATP pocket. Tyr-59 contacts L-glutamine. Asp-76 provides a ligand contact to ATP. Mg(2+) is bound by residues Asp-76 and Glu-146. CTP-binding positions include 153–155 (DIE), 193–198 (KTKPTQ), and Lys-229. Residues 193-198 (KTKPTQ) and Lys-229 contribute to the UTP site. The Glutamine amidotransferase type-1 domain maps to 299–543 (TIVVCGKYTE…VGAAKSYAAV (245 aa)). An L-glutamine-binding site is contributed by Gly-363. The active-site Nucleophile; for glutamine hydrolysis is Cys-390. L-glutamine-binding positions include 391–394 (LGMQ), Glu-414, and Arg-471. Active-site residues include His-516 and Glu-518. Residues 562–571 (AEAYAAYSEE) show a composition bias toward low complexity. The tract at residues 562–594 (AEAYAAYSEESSAESKSFFPDNGGHDEERDSGQ) is disordered. Basic and acidic residues predominate over residues 584–594 (GGHDEERDSGQ).

This sequence belongs to the CTP synthase family. As to quaternary structure, homotetramer.

It catalyses the reaction UTP + L-glutamine + ATP + H2O = CTP + L-glutamate + ADP + phosphate + 2 H(+). The catalysed reaction is L-glutamine + H2O = L-glutamate + NH4(+). The enzyme catalyses UTP + NH4(+) + ATP = CTP + ADP + phosphate + 2 H(+). It participates in pyrimidine metabolism; CTP biosynthesis via de novo pathway; CTP from UDP: step 2/2. Its activity is regulated as follows. Allosterically activated by GTP, when glutamine is the substrate; GTP has no effect on the reaction when ammonia is the substrate. The allosteric effector GTP functions by stabilizing the protein conformation that binds the tetrahedral intermediate(s) formed during glutamine hydrolysis. Inhibited by the product CTP, via allosteric rather than competitive inhibition. Functionally, catalyzes the ATP-dependent amination of UTP to CTP with either L-glutamine or ammonia as the source of nitrogen. Regulates intracellular CTP levels through interactions with the four ribonucleotide triphosphates. This is CTP synthase from Chlorobium phaeovibrioides (strain DSM 265 / 1930) (Prosthecochloris vibrioformis (strain DSM 265)).